Consider the following 31-residue polypeptide: Protein YmiC (31 aa).

A helical membrane pass occupies residues 9 to 29 (WSWMGAFSLSMLFWAELLWII).

It is found in the cell inner membrane. The polypeptide is Protein YmiC (Escherichia coli (strain K12)).